The primary structure comprises 318 residues: Acetyl-coenzyme A carboxylase carboxyl transferase subunit alpha (318 aa).

The CoA carboxyltransferase C-terminal domain occupies 41–295; the sequence is HLEKKNEELT…KQRILTDLNE (255 aa).

The protein belongs to the AccA family. As to quaternary structure, acetyl-CoA carboxylase is a heterohexamer composed of biotin carboxyl carrier protein (AccB), biotin carboxylase (AccC) and two subunits each of ACCase subunit alpha (AccA) and ACCase subunit beta (AccD).

It is found in the cytoplasm. The enzyme catalyses N(6)-carboxybiotinyl-L-lysyl-[protein] + acetyl-CoA = N(6)-biotinyl-L-lysyl-[protein] + malonyl-CoA. It functions in the pathway lipid metabolism; malonyl-CoA biosynthesis; malonyl-CoA from acetyl-CoA: step 1/1. Its function is as follows. Component of the acetyl coenzyme A carboxylase (ACC) complex. First, biotin carboxylase catalyzes the carboxylation of biotin on its carrier protein (BCCP) and then the CO(2) group is transferred by the carboxyltransferase to acetyl-CoA to form malonyl-CoA. The sequence is that of Acetyl-coenzyme A carboxylase carboxyl transferase subunit alpha from Tolumonas auensis (strain DSM 9187 / NBRC 110442 / TA 4).